Reading from the N-terminus, the 290-residue chain is Probable proteasome subunit beta type-6 (290 aa).

Belongs to the peptidase T1B family. As to quaternary structure, the 26S proteasome consists of a 20S proteasome core and two 19S regulatory subunits. The 20S proteasome core is composed of 28 subunits that are arranged in four stacked rings, resulting in a barrel-shaped structure. The two end rings are each formed by seven alpha subunits, and the two central rings are each formed by seven beta subunits. The catalytic chamber with the active sites is on the inside of the barrel.

The protein localises to the cytoplasm. It localises to the nucleus. Its function is as follows. Non-catalytic component of the proteasome which degrades poly-ubiquitinated proteins in the cytoplasm and in the nucleus. It is essential for the regulated turnover of proteins and for the removal of misfolded proteins. The proteasome is a multicatalytic proteinase complex that is characterized by its ability to cleave peptides with Arg, Phe, Tyr, Leu, and Glu adjacent to the leaving group at neutral or slightly basic pH. It has an ATP-dependent proteolytic activity. The chain is Probable proteasome subunit beta type-6 (PRE7) from Encephalitozoon cuniculi (strain GB-M1) (Microsporidian parasite).